A 561-amino-acid chain; its full sequence is Cation diffusion facilitator family protein 1 (561 aa).

Residues 1–20 are compositionally biased toward basic and acidic residues; it reads MEVTMEDRSVKADKADRDDN. A disordered region spans residues 1-26; sequence MEVTMEDRSVKADKADRDDNNTTSTE. The Cytoplasmic portion of the chain corresponds to 1 to 112; the sequence is MEVTMEDRSV…SESVKGVSRS (112 aa). The chain crosses the membrane as a helical span at residues 113 to 133; sequence LIIQIGMTVIFCALEFITGVV. The Extracellular segment spans residues 134–136; that stretch reads CSS. Residues 137 to 157 form a helical membrane-spanning segment; that stretch reads IAMLADSYHMAADVMALIVAF. Topologically, residues 158–176 are cytoplasmic; sequence TCIKIATRPSTRLGYGWVR. Residues 177-197 traverse the membrane as a helical segment; it reads AETLGGFFNGIFMCTVCVLVF. Topologically, residues 198-215 are extracellular; it reads QEAVGRIINVHMITHPLQ. Residues 216-236 form a helical membrane-spanning segment; it reads VLVIGFIGLLINLFGMFNLSG. The Cytoplasmic portion of the chain corresponds to 237–391; sequence HGHSHGGGSH…NVNIHGVWLH (155 aa). Residues 240–304 are disordered; sequence SHGGGSHGHS…HTRLNGKFRS (65 aa). The tract at residues 246–270 is 6 X 2 AA approximate repeats of H-G; that stretch reads HGHSHGGSHGHSHNNKKTKKNDGHG. The span at 247–264 shows a compositional bias: basic residues; sequence GHSHGGSHGHSHNNKKTK. Residues 392 to 412 form a helical membrane-spanning segment; it reads LLSDAFGSVIVMISAGFVYFL. Topologically, residues 413-420 are extracellular; it reads PTWKIAAY. Residues 421–441 traverse the membrane as a helical segment; sequence LDPILSISLASIMGFTAVVLV. Residues 442-561 are Cytoplasmic-facing; that stretch reads KTSGEKLLKQ…SVSTENEITE (120 aa).

Belongs to the cation diffusion facilitator (CDF) transporter (TC 2.A.4) family. SLC30A subfamily. In terms of assembly, interacts with lin-45 in a zinc-dependent manner. In terms of tissue distribution, expressed in intestinal cells. Expressed in the vulva.

The protein localises to the basolateral cell membrane. In terms of biological role, involved in the regulation of Pn.p cell fate determination. Involved in zinc metabolism and the decrease of the cytosolic zinc concentration which is thought to modulate Ras signaling. Involved in zinc transport from the intestinal lumen to the pseudocoelum. This chain is Cation diffusion facilitator family protein 1 (cdf-1), found in Caenorhabditis elegans.